The chain runs to 430 residues: Serine--tRNA ligase (430 aa).

Threonine 235 to glutamate 237 contributes to the L-serine binding site. ATP is bound by residues arginine 266–glutamate 268 and valine 282. Residue glutamate 289 coordinates L-serine. Residue glutamate 353–serine 356 coordinates ATP. Position 389 (serine 389) interacts with L-serine.

It belongs to the class-II aminoacyl-tRNA synthetase family. Type-1 seryl-tRNA synthetase subfamily. In terms of assembly, homodimer. The tRNA molecule binds across the dimer.

The protein localises to the cytoplasm. It carries out the reaction tRNA(Ser) + L-serine + ATP = L-seryl-tRNA(Ser) + AMP + diphosphate + H(+). The catalysed reaction is tRNA(Sec) + L-serine + ATP = L-seryl-tRNA(Sec) + AMP + diphosphate + H(+). It functions in the pathway aminoacyl-tRNA biosynthesis; selenocysteinyl-tRNA(Sec) biosynthesis; L-seryl-tRNA(Sec) from L-serine and tRNA(Sec): step 1/1. In terms of biological role, catalyzes the attachment of serine to tRNA(Ser). Is also able to aminoacylate tRNA(Sec) with serine, to form the misacylated tRNA L-seryl-tRNA(Sec), which will be further converted into selenocysteinyl-tRNA(Sec). In Chlorobium phaeovibrioides (strain DSM 265 / 1930) (Prosthecochloris vibrioformis (strain DSM 265)), this protein is Serine--tRNA ligase.